Here is a 160-residue protein sequence, read N- to C-terminus: SsrA-binding protein (160 aa).

Residues 134 to 160 form a disordered region; sequence RKAHDKREAVKERDWNRDKARLMRDRG. Over residues 138–160 the composition is skewed to basic and acidic residues; the sequence is DKREAVKERDWNRDKARLMRDRG.

This sequence belongs to the SmpB family.

The protein resides in the cytoplasm. Functionally, required for rescue of stalled ribosomes mediated by trans-translation. Binds to transfer-messenger RNA (tmRNA), required for stable association of tmRNA with ribosomes. tmRNA and SmpB together mimic tRNA shape, replacing the anticodon stem-loop with SmpB. tmRNA is encoded by the ssrA gene; the 2 termini fold to resemble tRNA(Ala) and it encodes a 'tag peptide', a short internal open reading frame. During trans-translation Ala-aminoacylated tmRNA acts like a tRNA, entering the A-site of stalled ribosomes, displacing the stalled mRNA. The ribosome then switches to translate the ORF on the tmRNA; the nascent peptide is terminated with the 'tag peptide' encoded by the tmRNA and targeted for degradation. The ribosome is freed to recommence translation, which seems to be the essential function of trans-translation. The sequence is that of SsrA-binding protein from Azorhizobium caulinodans (strain ATCC 43989 / DSM 5975 / JCM 20966 / LMG 6465 / NBRC 14845 / NCIMB 13405 / ORS 571).